Here is a 238-residue protein sequence, read N- to C-terminus: Probable transcriptional regulatory protein YeeN (238 aa).

Belongs to the TACO1 family. YeeN subfamily.

The protein resides in the cytoplasm. The sequence is that of Probable transcriptional regulatory protein YeeN from Escherichia coli O157:H7.